An 870-amino-acid polypeptide reads, in one-letter code: Leucine--tRNA ligase (870 aa).

Residues 55-65 carry the 'HIGH' region motif; that stretch reads PYPSGTLHMGH. The short motif at 626–630 is the 'KMSKS' region element; sequence KMSKS. Lysine 629 contacts ATP.

This sequence belongs to the class-I aminoacyl-tRNA synthetase family.

It is found in the cytoplasm. It catalyses the reaction tRNA(Leu) + L-leucine + ATP = L-leucyl-tRNA(Leu) + AMP + diphosphate. This chain is Leucine--tRNA ligase, found in Prochlorococcus marinus (strain SARG / CCMP1375 / SS120).